A 227-amino-acid polypeptide reads, in one-letter code: MVEVKKHKFPGVYIVIDDDGSEKIATKNLVPGQRVYGERVIKWEGEEYRIWNPHRSKLGAAIMNGLKNFPIKPGKSVLYLGIASGTTASHVSDVIGWEGKIFGIEFSPRVLRELVPIVEDRKNIVPILGDATKPEEYRALVPKVDVIFEDVAQPTQAKILIDNAEVYLKKGGYGMIAVKSRSIDVTKEPEQVFREVEKELSEYFEVIERLNLEPYEKDHALFVVRKT.

Residues 86 to 87 (TT), 105 to 106 (EF), 130 to 131 (DA), and 150 to 153 (DVAQ) each bind S-adenosyl-L-methionine.

Belongs to the methyltransferase superfamily. Fibrillarin family. As to quaternary structure, interacts with nop5. Component of box C/D small ribonucleoprotein (sRNP) particles that contain rpl7ae, FlpA and nop5, plus a guide RNA.

Involved in pre-rRNA and tRNA processing. Utilizes the methyl donor S-adenosyl-L-methionine to catalyze the site-specific 2'-hydroxyl methylation of ribose moieties in rRNA and tRNA. Site specificity is provided by a guide RNA that base pairs with the substrate. Methylation occurs at a characteristic distance from the sequence involved in base pairing with the guide RNA. The polypeptide is Fibrillarin-like rRNA/tRNA 2'-O-methyltransferase (Pyrococcus abyssi (strain GE5 / Orsay)).